The primary structure comprises 628 residues: (-)-beta-pinene synthase 1, chloroplastic (628 aa).

The transit peptide at 1–51 directs the protein to the chloroplast; sequence MDLISVLPSASKSCVCLHKPLSSSTHKLKPFCRTIRILGMPRPRKSVLMVS. Mg(2+)-binding residues include D379, D383, and D531. Positions 379–383 match the DDXXD motif motif; sequence DDMYD.

Belongs to the terpene synthase family. Tpsd subfamily. Mg(2+) serves as cofactor. The cofactor is Mn(2+).

The protein resides in the plastid. It is found in the chloroplast. It catalyses the reaction (2E)-geranyl diphosphate = (1S,5S)-beta-pinene + diphosphate. It carries out the reaction (2E)-geranyl diphosphate = (1S,5S)-alpha-pinene + diphosphate. The protein operates within terpene metabolism; oleoresin biosynthesis. It functions in the pathway secondary metabolite biosynthesis; terpenoid biosynthesis. Its function is as follows. Monoterpene synthase (TPS) involved in the biosynthesis of monoterpene natural products included in conifer oleoresin secretions and volatile emissions; these compounds contribute to biotic and abiotic stress defense against herbivores and pathogens. Catalyzes the conversion of (2E)-geranyl diphosphate (GPP) to (-)-beta-pinene and, to a lower extent, to (-)-alpha-pinene. The chain is (-)-beta-pinene synthase 1, chloroplastic from Pinus banksiana (Jack pine).